Here is a 462-residue protein sequence, read N- to C-terminus: Argininosuccinate lyase (462 aa).

This sequence belongs to the lyase 1 family. Argininosuccinate lyase subfamily.

The protein resides in the cytoplasm. It carries out the reaction 2-(N(omega)-L-arginino)succinate = fumarate + L-arginine. Its pathway is amino-acid biosynthesis; L-arginine biosynthesis; L-arginine from L-ornithine and carbamoyl phosphate: step 3/3. The polypeptide is Argininosuccinate lyase (Chloroflexus aggregans (strain MD-66 / DSM 9485)).